Reading from the N-terminus, the 593-residue chain is Inactive metallocarboxypeptidase ECM14 (593 aa).

The N-terminal stretch at 1–22 (MHVTVQLSLLLSLASSLPLVSA) is a signal peptide. A propeptide spanning residues 23-175 (IPQHDGQAYT…QAIYESYPKN (153 aa)) is cleaved from the precursor. Disordered regions lie at residues 75 to 98 (VPQR…KAPA) and 172 to 202 (YPKN…SQPH). The span at 78 to 88 (RGKDSETKTGK) shows a compositional bias: basic and acidic residues. Polar residues predominate over residues 188–199 (RRFSPSASTPES). Residues 211 to 537 (DYQPLSVLLP…HAVVAMGKFL (327 aa)) form the Peptidase M14 domain. His-276 and Glu-279 together coordinate Zn(2+). Substrate is bound by residues 276–279 (HARE), Arg-334, and 351–352 (DR). An intrachain disulfide couples Cys-345 to Cys-368. A glycan (N-linked (GlcNAc...) asparagine) is linked at Asn-361. His-408 is a binding site for Zn(2+). 409-410 (SY) lines the substrate pocket. The segment at 548-593 (DEPHAGEQTQDNSYDEDGDNLFRAQGGDPQVRFTRRNIGAHDDDSE) is disordered.

This sequence belongs to the peptidase M14 family. It depends on Zn(2+) as a cofactor.

The protein localises to the vacuole. It is found in the secreted. In terms of biological role, inactive carboxypeptidase that may play a role in cell wall organization and biogenesis. The polypeptide is Inactive metallocarboxypeptidase ECM14 (ECM14) (Arthroderma otae (strain ATCC MYA-4605 / CBS 113480) (Microsporum canis)).